The sequence spans 399 residues: Chaperone protein DnaJ 1 (399 aa).

The J domain occupies 10-75 (DYYKVLGVPK…KKRKEYDEAR (66 aa)). Residues 166 to 244 (GATVPLRMSS…CKGSGRAKSS (79 aa)) form a CR-type zinc finger. Zn(2+) is bound by residues C179, C182, C195, C198, C218, C221, C232, and C235. CXXCXGXG motif repeat units lie at residues 179–186 (CKACSGTG), 195–202 (CPTCVGTG), 218–225 (CPDCKGRG), and 232–239 (CEVCKGSG).

The protein belongs to the DnaJ family. Homodimer. Zn(2+) serves as cofactor.

The protein localises to the cytoplasm. Participates actively in the response to hyperosmotic and heat shock by preventing the aggregation of stress-denatured proteins and by disaggregating proteins, also in an autonomous, DnaK-independent fashion. Unfolded proteins bind initially to DnaJ; upon interaction with the DnaJ-bound protein, DnaK hydrolyzes its bound ATP, resulting in the formation of a stable complex. GrpE releases ADP from DnaK; ATP binding to DnaK triggers the release of the substrate protein, thus completing the reaction cycle. Several rounds of ATP-dependent interactions between DnaJ, DnaK and GrpE are required for fully efficient folding. Also involved, together with DnaK and GrpE, in the DNA replication of plasmids through activation of initiation proteins. This Streptomyces coelicolor (strain ATCC BAA-471 / A3(2) / M145) protein is Chaperone protein DnaJ 1.